Reading from the N-terminus, the 371-residue chain is Glutamate 5-kinase (371 aa).

Residue K14 participates in ATP binding. Residues S52, D139, and N151 each contribute to the substrate site. Residue 171–172 participates in ATP binding; it reads SD. Positions 275 to 353 constitute a PUA domain; that stretch reads EGRLHLDSGA…ADLAMELGPS (79 aa).

This sequence belongs to the glutamate 5-kinase family.

It localises to the cytoplasm. It catalyses the reaction L-glutamate + ATP = L-glutamyl 5-phosphate + ADP. Its pathway is amino-acid biosynthesis; L-proline biosynthesis; L-glutamate 5-semialdehyde from L-glutamate: step 1/2. In terms of biological role, catalyzes the transfer of a phosphate group to glutamate to form L-glutamate 5-phosphate. The protein is Glutamate 5-kinase of Frankia casuarinae (strain DSM 45818 / CECT 9043 / HFP020203 / CcI3).